The chain runs to 32 residues: Turripeptide XIV-18 (32 aa).

Position 30 is an isoleucine amide (Ile-30).

Post-translationally, contains 2 disulfide bonds. In terms of tissue distribution, expressed by the venom duct.

It localises to the secreted. The protein is Turripeptide XIV-18 of Gemmula speciosa (Splendid gem-turris).